The following is a 125-amino-acid chain: Desulfoferrodoxin (125 aa).

Positions 49, 69, 75, 115, and 118 each coordinate Fe cation.

Belongs to the desulfoferrodoxin family. It depends on Cu(2+) as a cofactor.

It carries out the reaction reduced [rubredoxin] + superoxide + 2 H(+) = oxidized [rubredoxin] + H2O2. In terms of biological role, catalyzes the reduction of superoxide to hydrogen peroxide, using electrons from NADH and NADH:rubredoxin oxidoreductase (NROR) and rubredoxin (Rd) as electron transport intermediaries between NADH and Dfx. Is a key factor in the superoxide reductase dependent part of a pathway for detoxification of reactive oxygen species (ROS) in C.acetobutylicum, an obligate anaerobic bacterium. This chain is Desulfoferrodoxin (dfx), found in Clostridium acetobutylicum (strain ATCC 824 / DSM 792 / JCM 1419 / IAM 19013 / LMG 5710 / NBRC 13948 / NRRL B-527 / VKM B-1787 / 2291 / W).